Consider the following 394-residue polypeptide: Cytochrome b561 and DOMON domain-containing protein At4g12980 (394 aa).

The signal sequence occupies residues 1 to 24; it reads MDSSYLRISLSFLFWALLLSPAVS. Positions 49–169 constitute a DOMON domain; the sequence is LKAILHYSYD…GKVNQVWQVG (121 aa). The Cytochrome b561 domain occupies 184–381; the sequence is GPNLNSVGSL…LEVVTWVIVL (198 aa). Helical transmembrane passes span 220-240 and 252-272; these read IHGI…AMIA and AWFY…VAGW. His-221, His-257, and His-290 together coordinate heme b. Residues 292–312 traverse the membrane as a helical segment; that stretch reads NIGICLFSIATLQMFAMLLRP. His-326 serves as a coordination point for heme b. Transmembrane regions (helical) follow at residues 328 to 348 and 361 to 381; these read GVGY…LSIL and VIGT…VIVL.

Heme b is required as a cofactor.

The protein localises to the membrane. May act as a catecholamine-responsive trans-membrane electron transporter. This Arabidopsis thaliana (Mouse-ear cress) protein is Cytochrome b561 and DOMON domain-containing protein At4g12980.